We begin with the raw amino-acid sequence, 514 residues long: Ubiquitin carboxyl-terminal hydrolase 22 (514 aa).

The segment at 10–127 (PGCAHLGSFK…KEEQRKAWKM (118 aa)) adopts a UBP-type zinc-finger fold. Zn(2+)-binding residues include Cys12, His14, Cys52, Cys55, Cys65, Cys68, Cys73, His78, His82, His88, Cys101, and Cys104. At Lys118 the chain carries N6-acetyllysine. Residue Thr136 is modified to Phosphothreonine. In terms of domain architecture, USP spans 165–509 (RGLINLGNTC…EGYLLFYHKQ (345 aa)). Cys174 acts as the Nucleophile in catalysis. The residue at position 226 (Ser226) is a Phosphoserine. His468 functions as the Proton acceptor in the catalytic mechanism.

Belongs to the peptidase C19 family. UBP8 subfamily. As to quaternary structure, component of some SAGA transcription coactivator-HAT complexes, at least composed of ATXN7, ATXN7L3, ENY2, GCN5L2, SUPT3H, TAF10, TRRAP and USP22. Within the SAGA complex, ATXN7L3, ENY2 and USP22 form a subcomplex required for histone deubiquitination. Interacts directly with ATXN7L3; leading to its recruitment to the SAGA complex. Interacts with ATXN7L3 and weakly with ATXN7L3B. Interacts with MED1. Phosphorylated in G2/M phase, but not in G1 phase by CDK1. Post-translationally, ubiquitinated and subsequently degraded in a CDC20-dependent manner.

The protein resides in the nucleus. It localises to the cytoplasm. The enzyme catalyses Thiol-dependent hydrolysis of ester, thioester, amide, peptide and isopeptide bonds formed by the C-terminal Gly of ubiquitin (a 76-residue protein attached to proteins as an intracellular targeting signal).. Functionally, deubiquitinase that plays a role in several cellular processes including transcriptional regulation, cell cycle progression or innate immunity. As part of the transcription regulatory histone acetylation (HAT) complex SAGA, catalyzes the deubiquitination of both histones H2A and H2B, thereby acting as a transcriptional coactivator. Recruited to specific gene promoters by activators such as MYC, where it is required for transcription. Facilitates cell-cycle progression by stabilizing CCNB1 and antagonizing its proteasome-mediated degradation in a cell cycle-specific manner. Modulates cell cycle progression and apoptosis also by antagonizing TP53 transcriptional activation through deacetylase SIRT1 stabilization. Plays multiple roles in immunity and inflammation. Participates in antiviral response by deubiquitinating the importin KPNA2, leading to IRF3 nuclear translocation and subsequent type I interferon production. Acts as a central regulator of type III IFN signaling by negatively regulating STING1 activation and ubiquitination. Inhibits NLRP3 inflammasome activation by promoting NLRP3 degradation through ATG5-dependent autophagy. Deubiquitinates CD274 to induce its stabilization and thereby participates in maintenance of immune tolerance to self. Controls necroptotic cell death by regulating RIPK3 phosphorylation and ubiquitination. During bacterial infection, promotes pro-inflammatory response by targeting TRAF6 and removing its 'Lys-48'-linked polyubiquitination. The polypeptide is Ubiquitin carboxyl-terminal hydrolase 22 (USP22) (Bos taurus (Bovine)).